We begin with the raw amino-acid sequence, 426 residues long: Glutamyl-tRNA reductase (426 aa).

Substrate contacts are provided by residues 49 to 52 (TCNR), serine 109, 114 to 116 (EGQ), and glutamine 120. Cysteine 50 (nucleophile) is an active-site residue. 189–194 (GAGETG) serves as a coordination point for NADP(+).

Belongs to the glutamyl-tRNA reductase family. Homodimer.

The enzyme catalyses (S)-4-amino-5-oxopentanoate + tRNA(Glu) + NADP(+) = L-glutamyl-tRNA(Glu) + NADPH + H(+). The protein operates within porphyrin-containing compound metabolism; protoporphyrin-IX biosynthesis; 5-aminolevulinate from L-glutamyl-tRNA(Glu): step 1/2. Catalyzes the NADPH-dependent reduction of glutamyl-tRNA(Glu) to glutamate 1-semialdehyde (GSA). This Chlorobaculum parvum (strain DSM 263 / NCIMB 8327) (Chlorobium vibrioforme subsp. thiosulfatophilum) protein is Glutamyl-tRNA reductase (hemA).